A 25-amino-acid chain; its full sequence is Antimicrobial peptide scolopin-2 (25 aa).

As to expression, expressed by the venom gland.

Its subcellular location is the secreted. Antimicrobial peptide against both Gram-positive, -negative and yeast. Also induces histamine release by mast cells and shows moderate hemolytic activities against both human and rabbit red cells. This Scolopendra mutilans (Chinese red-headed centipede) protein is Antimicrobial peptide scolopin-2.